The sequence spans 215 residues: Protein-L-isoaspartate O-methyltransferase 1 (215 aa).

Ser61 is an active-site residue.

Belongs to the methyltransferase superfamily. L-isoaspartyl/D-aspartyl protein methyltransferase family.

It localises to the cytoplasm. It catalyses the reaction [protein]-L-isoaspartate + S-adenosyl-L-methionine = [protein]-L-isoaspartate alpha-methyl ester + S-adenosyl-L-homocysteine. Its function is as follows. Catalyzes the methyl esterification of L-isoaspartyl residues in peptides and proteins that result from spontaneous decomposition of normal L-aspartyl and L-asparaginyl residues. It plays a role in the repair and/or degradation of damaged proteins. The sequence is that of Protein-L-isoaspartate O-methyltransferase 1 from Pelobacter propionicus (strain DSM 2379 / NBRC 103807 / OttBd1).